Reading from the N-terminus, the 152-residue chain is Transcriptional repressor NrdR (152 aa).

Residues 3–34 fold into a zinc finger; sequence CPFCNHGELKVIDSRNAPEANAIKRRRECLKC. The ATP-cone domain maps to 48–138; sequence LQVLKRDGRY…VYRRFKDVGE (91 aa).

It belongs to the NrdR family. It depends on Zn(2+) as a cofactor.

Its function is as follows. Negatively regulates transcription of bacterial ribonucleotide reductase nrd genes and operons by binding to NrdR-boxes. The polypeptide is Transcriptional repressor NrdR (Chlamydia pneumoniae (Chlamydophila pneumoniae)).